The sequence spans 638 residues: MHNHKVSGKQIVSYASFCLGNLGHSAFYGVMSTYFIIFITSGMFSGLNQSVADKLIGLITGLMVLVRIIELVIDPILGNVVDNTKTRWGKFKPWILIGTVVSAALLLILFTGIFGLAQQNWILFAILFVLIYIAFDVFYSLSDVSYWGMVPALSEDSHERGIYTSLGAFSGIIGWNSLPIIVVPLVTGVTYAVTGKHEEGAPGWFAFAAVISALAIICALIVCFGTKEKHNIIRDSAKQKTTLRQVFGAIFHNDQILWPSLAYLLYSLAAVITNGVLFYMYKFVIGKPNDFWVVGIIATIIGCCINPSFPVLNKYIPRKWLFIAGQTCMVLAYVLFIFGHNNVFLMDLGLVLFNINFALLVTVLTLTDAIEYGQLKIGQRNEAVVLAVRPMIDKFAGAVSNALVGYVAIAAGMTGSATAADMTSKGINTFNMMALYIPLALAVLSIVVFSLKVTLSEKKHAQVIEELKSKLAQGEIEKKTSVDTGTKEVTIYAPADGELMQMSSVVDEDGKPFPGKGFAIEPSSGQIYAPFDGTIKFTFGTKHAFEIVSQNGLQVVVHVGLGTVNLRGEGFETFYDDGQTVKKGDKLLEFDRDLALNNGYKDTIVIFYTQPGRIQNSGTIQAGKDIKHGEKVVDVQFK.

A permease region spans residues 1–470; sequence MHNHKVSGKQ…AQVIEELKSK (470 aa). 12 helical membrane-spanning segments follow: residues 27–47, 56–76, 94–114, 121–141, 166–186, 204–224, 261–281, 291–311, 320–340, 343–363, 395–415, and 429–449; these read FYGV…FSGL, IGLI…IDPI, WILI…TGIF, WILF…FYSL, LGAF…VPLV, WFAF…IVCF, LAYL…FYMY, FWVV…SFPV, WLFI…IFGH, VFLM…LVTV, FAGA…GMTG, and TFNM…IVVF. The PTS EIIA type-1 domain occupies 503-610; it reads SSVVDEDGKP…KDTIVIFYTQ (108 aa). H558 is modified (phosphohistidine; by HPr).

This sequence in the N-terminal section; belongs to the sodium:galactoside symporter (TC 2.A.2) family.

The protein resides in the cell membrane. In terms of biological role, responsible for transport of beta-galactosides into the cell, with the concomitant uptake of protons (symport system), and also for transport of homologous and heterologous exchange of beta-galactosides. In Lactobacillus helveticus (Lactobacillus suntoryeus), this protein is Lactose permease (lacS).